The following is a 230-amino-acid chain: MAAAPLLLLLLLVPVPLLPLLAQGPGGALGNRHAVYWNSSNQHLRREGYTVQVNVNDYLDIYCPHYNSSGPGGGAEQYVLYMVNLSGYRTCNASQGSKRWECNRQHASHSPIKFSEKFQRYSAFSLGYEFHAGQEYYYISTPTHNLHWKCLRMKVFVCCASTSHSGEKPVPTLPQFTMGPNVKINVLEDFEGENPQVPKLEKSISGTSPKREHLPLAVGIAFFLMTLLAS.

An N-terminal signal peptide occupies residues 1–22 (MAAAPLLLLLLLVPVPLLPLLA). In terms of domain architecture, Ephrin RBD spans 30–161 (GNRHAVYWNS…RMKVFVCCAS (132 aa)). N-linked (GlcNAc...) asparagine glycosylation is found at asparagine 38, asparagine 67, asparagine 84, and asparagine 92. 2 disulfide bridges follow: cysteine 63–cysteine 102 and cysteine 91–cysteine 150. Glycine 206 carries GPI-anchor amidated glycine lipidation. The propeptide at 207–230 (TSPKREHLPLAVGIAFFLMTLLAS) is removed in mature form.

This sequence belongs to the ephrin family. As to quaternary structure, interacts with EPHA8; activates EPHA8. As to expression, expressed in myogenic progenitor cells.

It is found in the cell membrane. Cell surface GPI-bound ligand for Eph receptors, a family of receptor tyrosine kinases which are crucial for migration, repulsion and adhesion during neuronal, vascular and epithelial development. Binds promiscuously Eph receptors residing on adjacent cells, leading to contact-dependent bidirectional signaling into neighboring cells. The signaling pathway downstream of the receptor is referred to as forward signaling while the signaling pathway downstream of the ephrin ligand is referred to as reverse signaling. The chain is Ephrin-A3 (Efna3) from Mus musculus (Mouse).